A 159-amino-acid polypeptide reads, in one-letter code: Phosphopantetheine adenylyltransferase (159 aa).

Residue Thr9 participates in substrate binding. ATP contacts are provided by residues 9–10 and His17; that span reads TF. Substrate-binding residues include Lys41, Leu73, and Arg87. Residues 88 to 90, Glu98, and 123 to 129 contribute to the ATP site; these read GLR and YSFISST.

It belongs to the bacterial CoaD family. Homohexamer. Requires Mg(2+) as cofactor.

It localises to the cytoplasm. The catalysed reaction is (R)-4'-phosphopantetheine + ATP + H(+) = 3'-dephospho-CoA + diphosphate. Its pathway is cofactor biosynthesis; coenzyme A biosynthesis; CoA from (R)-pantothenate: step 4/5. Its function is as follows. Reversibly transfers an adenylyl group from ATP to 4'-phosphopantetheine, yielding dephospho-CoA (dPCoA) and pyrophosphate. The protein is Phosphopantetheine adenylyltransferase of Pseudomonas aeruginosa (strain LESB58).